We begin with the raw amino-acid sequence, 57 residues long: UPF0434 protein swp_2279 (57 aa).

This sequence belongs to the UPF0434 family.

This Shewanella piezotolerans (strain WP3 / JCM 13877) protein is UPF0434 protein swp_2279.